A 75-amino-acid polypeptide reads, in one-letter code: U6-lycotoxin-Ls1d (75 aa).

A signal peptide spans 1–21 (MKLLLFTALVLVVISLIEVEA). A propeptide spanning residues 22-25 (ENER) is cleaved from the precursor.

This sequence belongs to the neurotoxin 19 (CSTX) family. 06 (U6-Lctx) subfamily. Post-translationally, contains 4 disulfide bonds. Expressed by the venom gland.

It localises to the secreted. The protein is U6-lycotoxin-Ls1d of Lycosa singoriensis (Wolf spider).